The primary structure comprises 649 residues: ENTH domain-containing protein C19F8.03c (649 aa).

The 135-residue stretch at 2–136 folds into the ENTH domain; it reads SPSKWLLTYE…VDYAQVGDAP (135 aa). 3 disordered regions span residues 280 to 382, 409 to 440, and 590 to 649; these read YLQN…NELE, LSAEGTSASPSLDKKSESTNIVQPIPSHPNDS, and FTHG…PFRS. Phosphoserine is present on residues serine 285 and serine 287. Positions 299 to 308 are enriched in basic residues; that stretch reads PTLRKKKSIP. 2 stretches are compositionally biased toward polar residues: residues 313 to 326 and 340 to 349; these read ESSSTIQKENTVQQ and PETQRTTSRI. Residues 352 to 381 are compositionally biased toward acidic residues; that stretch reads QEEEIKEEEMEGEEEEEEEEVPNYESENEL. Polar residues-rich tracts occupy residues 409–418, 614–624, and 635–649; these read LSAEGTSASP, TPYTASKNPFS, and ARNSISTESKNPFRS. At threonine 414 the chain carries Phosphothreonine. A Phosphoserine modification is found at serine 417.

It is found in the cytoplasm. This is ENTH domain-containing protein C19F8.03c from Schizosaccharomyces pombe (strain 972 / ATCC 24843) (Fission yeast).